Consider the following 946-residue polypeptide: Inter-alpha-trypsin inhibitor heavy chain H2 (946 aa).

Positions 1–18 (MKRLTCFFICFFLSEVSG) are cleaved as a signal peptide. Positions 19 to 54 (FEIPINGLSEFVDYEDLVELAPGKFQLVAENRRYQR) are excised as a propeptide. One can recognise a VIT domain in the interval 56–185 (LPGESEEMME…KVQFELHYQE (130 aa)). Position 60 is a phosphoserine; by FAM20C (Ser-60). Residue Asn-118 is glycosylated (N-linked (GlcNAc...) (complex) asparagine). A disulfide bridge links Cys-261 with Cys-264. 2 positions are modified to 4-carboxyglutamate: Glu-282 and Glu-283. Residues 308–468 (PKNILFVIDV…YDFLKRLSNE (161 aa)) form the VWFA domain. The N-linked (GlcNAc...) asparagine glycan is linked to Asn-445. Ser-466 bears the Phosphoserine; by FAM20C mark. Residues Cys-650 and Cys-651 are joined by a disulfide bond. The segment at 665–679 (STPSWANPSPTPVIS) is O-glycosylated at three sites. An O-linked (GalNAc...) threonine; partial glycan is attached at Thr-666. Ser-673 carries O-linked (GalNAc...) serine glycosylation. 2 O-linked (GalNAc...) threonine glycosylation sites follow: Thr-675 and Thr-691. At Asp-702 the chain carries Aspartate 1-(chondroitin 4-sulfate)-ester. A propeptide spanning residues 703 to 946 (PHFIIYLPKS…PQLYSFLKRP (244 aa)) is cleaved from the precursor. The residue at position 886 (Ser-886) is a Phosphoserine; by FAM20C.

In terms of assembly, I-alpha-I plasma protease inhibitors are assembled from one or two heavy chains (HC) and one light chain, bikunin. Inter-alpha-inhibitor (I-alpha-I) is composed of ITIH1/HC1, ITIH2/HC2 and bikunin. In terms of processing, heavy chains are linked to bikunin via chondroitin 4-sulfate esterified to the alpha-carboxyl of the C-terminal aspartate after propeptide cleavage. Post-translationally, N- and O-glycosylated. O-glycosylated with core 1 or possibly core 8 glycans. Phosphorylated by FAM20C in the extracellular medium. As to expression, plasma.

Its subcellular location is the secreted. Its function is as follows. May act as a carrier of hyaluronan in serum or as a binding protein between hyaluronan and other matrix protein, including those on cell surfaces in tissues to regulate the localization, synthesis and degradation of hyaluronan which are essential to cells undergoing biological processes. The protein is Inter-alpha-trypsin inhibitor heavy chain H2 (ITIH2) of Homo sapiens (Human).